The sequence spans 412 residues: Peptidase T (412 aa).

H84 serves as a coordination point for Zn(2+). D86 is an active-site residue. D146 lines the Zn(2+) pocket. The active-site Proton acceptor is E179. The Zn(2+) site is built by E180, D202, and H385.

The protein belongs to the peptidase M20B family. It depends on Zn(2+) as a cofactor.

The protein localises to the cytoplasm. It carries out the reaction Release of the N-terminal residue from a tripeptide.. Functionally, cleaves the N-terminal amino acid of tripeptides. The sequence is that of Peptidase T from Haemophilus influenzae (strain PittGG).